A 427-amino-acid polypeptide reads, in one-letter code: Serine--tRNA ligase 2 (427 aa).

Over residues 35–53 (RRRSEAQAEVTRLRTELNR) the composition is skewed to basic and acidic residues. Residues 35-72 (RRRSEAQAEVTRLRTELNRTSRARGRSGPPSEEEKEAA) form a disordered region. 230–232 (TAE) provides a ligand contact to L-serine. ATP is bound at residue 261–263 (RAE). Residue E284 participates in L-serine binding. 348–351 (EISS) is a binding site for ATP. S383 is a binding site for L-serine.

Belongs to the class-II aminoacyl-tRNA synthetase family. Type-1 seryl-tRNA synthetase subfamily. As to quaternary structure, homodimer. The tRNA molecule binds across the dimer.

The protein resides in the cytoplasm. It catalyses the reaction tRNA(Ser) + L-serine + ATP = L-seryl-tRNA(Ser) + AMP + diphosphate + H(+). The catalysed reaction is tRNA(Sec) + L-serine + ATP = L-seryl-tRNA(Sec) + AMP + diphosphate + H(+). It functions in the pathway aminoacyl-tRNA biosynthesis; selenocysteinyl-tRNA(Sec) biosynthesis; L-seryl-tRNA(Sec) from L-serine and tRNA(Sec): step 1/1. Its function is as follows. Catalyzes the attachment of serine to tRNA(Ser). Is also able to aminoacylate tRNA(Sec) with serine, to form the misacylated tRNA L-seryl-tRNA(Sec), which will be further converted into selenocysteinyl-tRNA(Sec). The sequence is that of Serine--tRNA ligase 2 from Streptomyces avermitilis (strain ATCC 31267 / DSM 46492 / JCM 5070 / NBRC 14893 / NCIMB 12804 / NRRL 8165 / MA-4680).